A 155-amino-acid polypeptide reads, in one-letter code: MYKIQLLSCIALTLALVANGAPTSSSTGNTMKEVKSLLLDLQLLLEKVKNPENLKLSRMHTFNFYVPKVNATELKHLKCLLEELKLLEEVLNLAPSKNLNPREIKDSMDNIKRIVLELQGSETGFTCEYDDATVKAVEFLNKWITFCQSIYSTMT.

The first 20 residues, 1 to 20, serve as a signal peptide directing secretion; it reads MYKIQLLSCIALTLALVANG. A glycan (O-linked (GalNAc...) threonine) is linked at threonine 23. A disulfide bridge links cysteine 79 with cysteine 127.

Belongs to the IL-2 family.

It localises to the secreted. Cytokine produced by activated CD4-positive helper T-cells and to a lesser extend activated CD8-positive T-cells and natural killer (NK) cells that plays pivotal roles in the immune response and tolerance. Binds to a receptor complex composed of either the high-affinity trimeric IL-2R (IL2RA/CD25, IL2RB/CD122 and IL2RG/CD132) or the low-affinity dimeric IL-2R (IL2RB and IL2RG). Interaction with the receptor leads to oligomerization and conformation changes in the IL-2R subunits resulting in downstream signaling starting with phosphorylation of JAK1 and JAK3. In turn, JAK1 and JAK3 phosphorylate the receptor to form a docking site leading to the phosphorylation of several substrates including STAT5. This process leads to activation of several pathways including STAT, phosphoinositide-3-kinase/PI3K and mitogen-activated protein kinase/MAPK pathways. Functions as a T-cell growth factor and can increase NK-cell cytolytic activity as well. Promotes strong proliferation of activated B-cells and subsequently immunoglobulin production. Plays a pivotal role in regulating the adaptive immune system by controlling the survival and proliferation of regulatory T-cells, which are required for the maintenance of immune tolerance. Moreover, participates in the differentiation and homeostasis of effector T-cell subsets, including Th1, Th2, Th17 as well as memory CD8-positive T-cells. The protein is Interleukin-2 (IL2) of Bubalus bubalis (Domestic water buffalo).